The sequence spans 28 residues: Trypsin inhibitor 2 (28 aa).

3 disulfides stabilise this stretch: Cys-3-Cys-20, Cys-10-Cys-22, and Cys-16-Cys-27.

It belongs to the protease inhibitor I7 (squash-type serine protease inhibitor) family.

It is found in the secreted. In terms of biological role, inhibits trypsin. This chain is Trypsin inhibitor 2, found in Momordica charantia (Bitter gourd).